The sequence spans 660 residues: DNA mismatch repair protein MutL (660 aa).

This sequence belongs to the DNA mismatch repair MutL/HexB family.

Its function is as follows. This protein is involved in the repair of mismatches in DNA. It is required for dam-dependent methyl-directed DNA mismatch repair. May act as a 'molecular matchmaker', a protein that promotes the formation of a stable complex between two or more DNA-binding proteins in an ATP-dependent manner without itself being part of a final effector complex. The protein is DNA mismatch repair protein MutL of Streptococcus pyogenes serotype M3 (strain ATCC BAA-595 / MGAS315).